Here is an 857-residue protein sequence, read N- to C-terminus: DNA mismatch repair protein MutS (857 aa).

ATP is bound at residue 603–610 (GPNMAGKS).

Belongs to the DNA mismatch repair MutS family.

Its function is as follows. This protein is involved in the repair of mismatches in DNA. It is possible that it carries out the mismatch recognition step. This protein has a weak ATPase activity. This is DNA mismatch repair protein MutS from Methanothrix thermoacetophila (strain DSM 6194 / JCM 14653 / NBRC 101360 / PT) (Methanosaeta thermophila).